Consider the following 401-residue polypeptide: 3-hydroxyisobutyryl-CoA hydrolase-like protein 1, mitochondrial (401 aa).

The transit peptide at 1–26 (MHNAKGLLGRIVRDKLWRFGYRRSLC) directs the protein to the mitochondrion.

It belongs to the enoyl-CoA hydratase/isomerase family.

It is found in the mitochondrion. The protein is 3-hydroxyisobutyryl-CoA hydrolase-like protein 1, mitochondrial of Arabidopsis thaliana (Mouse-ear cress).